An 86-amino-acid chain; its full sequence is Small ribosomal subunit protein bS20 (86 aa).

The segment at 1–27 (MANNKSAKKRAIQAEKRRQHNASRRSM) is disordered.

Belongs to the bacterial ribosomal protein bS20 family.

Its function is as follows. Binds directly to 16S ribosomal RNA. The protein is Small ribosomal subunit protein bS20 of Vibrio cholerae serotype O1 (strain ATCC 39541 / Classical Ogawa 395 / O395).